A 405-amino-acid chain; its full sequence is L-carnitine CoA-transferase (405 aa).

CoA is bound by residues lysine 97 and arginine 104. Catalysis depends on aspartate 169, which acts as the Nucleophile.

It belongs to the CoA-transferase III family. CaiB subfamily. As to quaternary structure, homodimer.

The protein localises to the cytoplasm. It catalyses the reaction crotonobetainyl-CoA + (R)-carnitine = crotonobetaine + (R)-carnitinyl-CoA. The catalysed reaction is 4-(trimethylamino)butanoyl-CoA + (R)-carnitine = (R)-carnitinyl-CoA + 4-(trimethylamino)butanoate. It functions in the pathway amine and polyamine metabolism; carnitine metabolism. Its function is as follows. Catalyzes the reversible transfer of the CoA moiety from gamma-butyrobetainyl-CoA to L-carnitine to generate L-carnitinyl-CoA and gamma-butyrobetaine. Is also able to catalyze the reversible transfer of the CoA moiety from gamma-butyrobetainyl-CoA or L-carnitinyl-CoA to crotonobetaine to generate crotonobetainyl-CoA. The sequence is that of L-carnitine CoA-transferase from Escherichia coli O127:H6 (strain E2348/69 / EPEC).